The following is a 324-amino-acid chain: CIMIP2 protein GA14893 (324 aa).

This sequence belongs to the CIMIP2 family.

The protein localises to the cytoplasm. It is found in the cytoskeleton. Its subcellular location is the cilium axoneme. Probable microtubule inner protein (MIP) part of the dynein-decorated doublet microtubules (DMTs) in cilium axoneme. The polypeptide is CIMIP2 protein GA14893 (Drosophila pseudoobscura pseudoobscura (Fruit fly)).